Here is a 566-residue protein sequence, read N- to C-terminus: Glucose-6-phosphate isomerase (566 aa).

Glu-374 acts as the Proton donor in catalysis. Catalysis depends on residues His-405 and Lys-529.

This sequence belongs to the GPI family.

The protein localises to the cytoplasm. The catalysed reaction is alpha-D-glucose 6-phosphate = beta-D-fructose 6-phosphate. Its pathway is carbohydrate biosynthesis; gluconeogenesis. The protein operates within carbohydrate degradation; glycolysis; D-glyceraldehyde 3-phosphate and glycerone phosphate from D-glucose: step 2/4. Catalyzes the reversible isomerization of glucose-6-phosphate to fructose-6-phosphate. The polypeptide is Glucose-6-phosphate isomerase (Bifidobacterium longum (strain NCC 2705)).